A 578-amino-acid chain; its full sequence is Lysine--tRNA ligase (578 aa).

2 residues coordinate Mg(2+): Glu-414 and Glu-421.

Belongs to the class-II aminoacyl-tRNA synthetase family. As to quaternary structure, homodimer. The cofactor is Mg(2+).

The protein localises to the cytoplasm. It catalyses the reaction tRNA(Lys) + L-lysine + ATP = L-lysyl-tRNA(Lys) + AMP + diphosphate. This chain is Lysine--tRNA ligase, found in Porphyromonas gingivalis (strain ATCC BAA-308 / W83).